The chain runs to 722 residues: Bifunctional UDP-N-acetylglucosamine 2-epimerase/N-acetylmannosamine kinase (722 aa).

UDP-binding residues include Arg19, Ser23, Arg113, His220, and Asn253. CMP-N-acetyl-beta-neuraminate-binding residues include Lys259, Glu271, Lys280, and His281. UDP contacts are provided by Val282, Ser301, Ser302, Glu307, and Arg321. Residues 406-722 (TLSALAVDLG…VLDYTTRRIY (317 aa)) are N-acetylmannosamine kinase. Residue Asp413 participates in Mg(2+) binding. Gly416 lines the an N-acyl-D-mannosamine 6-phosphate pocket. Positions 417, 418, and 420 each coordinate ADP. An N-acyl-D-mannosamine 6-phosphate contacts are provided by Gly476, Arg477, Thr489, Asn516, Asp517, and Gly545. Residues Gly476, Arg477, Thr489, Asn516, and Asp517 each contribute to the an N-acyl-D-mannosamine site. Residue Asp517 is part of the active site. An N-acyl-D-mannosamine-binding residues include Glu566 and His569. His569 serves as a coordination point for an N-acyl-D-mannosamine 6-phosphate. Zn(2+)-binding residues include His569, Cys579, Cys581, and Cys586. Glu588 is an an N-acyl-D-mannosamine 6-phosphate binding site. Glu588 serves as a coordination point for an N-acyl-D-mannosamine.

In the N-terminal section; belongs to the UDP-N-acetylglucosamine 2-epimerase family. The protein in the C-terminal section; belongs to the ROK (NagC/XylR) family. In terms of assembly, homodimer. Homotetramer. Homohexamer. The hexameric form exhibits both enzyme activities, whereas the dimeric form only catalyzes the phosphorylation of N-acyl-D-mannosamine. Post-translationally, phosphorylated. Phosphorylation by PKC activates the UDP-N-acetylglucosamine 2-epimerase activity. In terms of tissue distribution, highest expression in liver and placenta. Also found in heart, brain, lung, kidney, skeletal muscle and pancreas. Isoform 1 is expressed in heart, brain, kidney, liver, placenta, lung, spleen, pancreas, skeletal muscle and colon. Isoform 2 is expressed mainly in placenta, but also in brain, kidney, liver, lung, pancreas and colon. Isoform 3 is expressed at low level in kidney, liver, placenta and colon.

The protein localises to the cytoplasm. It is found in the cytosol. The catalysed reaction is UDP-N-acetyl-alpha-D-glucosamine + H2O = aldehydo-N-acetyl-D-mannosamine + UDP + H(+). It catalyses the reaction an N-acyl-D-mannosamine + ATP = an N-acyl-D-mannosamine 6-phosphate + ADP + H(+). It functions in the pathway amino-sugar metabolism; N-acetylneuraminate biosynthesis. The UDP-N-acetylglucosamine 2-epimerase activity, in contrast to the N-acetylmannosamine kinase activity, exhibits allosteric regulation by cytidine monophosphate-N-acetylneuraminic acid (CMP-Neu5Ac), the end product of neuraminic acid biosynthesis. Moreover, the activity is contingent upon the oligomeric state of the enzyme. The monomeric form is inactive, while the dimeric form selectively catalyzes the phosphorylation of N-acetylmannosamine. The hexameric form, on the other hand, demonstrates full proficiency in both enzyme activities. Furthermore, the UDP-N-acetylglucosamine 2-epimerase activity is increased by PKC-mediated phosphorylation. Bifunctional enzyme that possesses both UDP-N-acetylglucosamine 2-epimerase and N-acetylmannosamine kinase activities, and serves as the initiator of the biosynthetic pathway leading to the production of N-acetylneuraminic acid (NeuAc), a critical precursor in the synthesis of sialic acids. By catalyzing this pivotal and rate-limiting step in sialic acid biosynthesis, this enzyme assumes a pivotal role in governing the regulation of cell surface sialylation, playing a role in embryonic angiogenesis. Sialic acids represent a category of negatively charged sugars that reside on the surface of cells as terminal components of glycoconjugates and mediate important functions in various cellular processes, including cell adhesion, signal transduction, and cellular recognition. The polypeptide is Bifunctional UDP-N-acetylglucosamine 2-epimerase/N-acetylmannosamine kinase (Homo sapiens (Human)).